We begin with the raw amino-acid sequence, 857 residues long: Mitogen-activated protein kinase kinase kinase dlk-1 (857 aa).

The Protein kinase domain maps to 62-304 (ISNLEWLGSG…FSHIRQHWEI (243 aa)). ATP contacts are provided by residues 68–76 (LGSGSQGAV) and Lys89. The active-site Proton acceptor is the Asp173. Disordered stretches follow at residues 441–503 (EEMS…ISRN), 572–625 (RIAS…PSRN), 733–775 (NAND…MESE), and 818–857 (HSIKTHRRTSSNPQAIIHQRIEEYSSSATEDSDDAGAVRI). Residues 467 to 488 (SSGAQSSPFSRQSSCRSSAGQQ) are compositionally biased toward low complexity. The span at 609 to 623 (APRSSSKLNRSSYPS) shows a compositional bias: polar residues. The segment covering 753-762 (ADVESSEDEG) has biased composition (acidic residues). Over residues 763-772 (NGNNILNTSM) the composition is skewed to polar residues.

It belongs to the protein kinase superfamily. STE Ser/Thr protein kinase family. MAP kinase kinase kinase subfamily. It depends on Mg(2+) as a cofactor. Post-translationally, ubiquitinated by rpm-1. Negatively regulated by ubiquitination by fsn-1 bound rpm-1, followed by degradation.

It is found in the synapse. The catalysed reaction is L-seryl-[protein] + ATP = O-phospho-L-seryl-[protein] + ADP + H(+). It carries out the reaction L-threonyl-[protein] + ATP = O-phospho-L-threonyl-[protein] + ADP + H(+). Component of a MAP kinase pathway that functions presynaptically to regulate synaptic architecture and presynaptic differentiation. Phosphorylates and activates mkk-4. This chain is Mitogen-activated protein kinase kinase kinase dlk-1, found in Caenorhabditis briggsae.